Here is a 277-residue protein sequence, read N- to C-terminus: NH(3)-dependent NAD(+) synthetase (277 aa).

47–54 (GISGGQDS) contacts ATP. Position 53 (aspartate 53) interacts with Mg(2+). A deamido-NAD(+)-binding site is contributed by arginine 141. Threonine 161 provides a ligand contact to ATP. Residue glutamate 166 coordinates Mg(2+). Residues lysine 174 and aspartate 181 each contribute to the deamido-NAD(+) site. 2 residues coordinate ATP: lysine 190 and threonine 212. Residue 261-262 (HK) coordinates deamido-NAD(+).

The protein belongs to the NAD synthetase family. In terms of assembly, homodimer.

It catalyses the reaction deamido-NAD(+) + NH4(+) + ATP = AMP + diphosphate + NAD(+) + H(+). The protein operates within cofactor biosynthesis; NAD(+) biosynthesis; NAD(+) from deamido-NAD(+) (ammonia route): step 1/1. Functionally, catalyzes the ATP-dependent amidation of deamido-NAD to form NAD. Uses ammonia as a nitrogen source. This chain is NH(3)-dependent NAD(+) synthetase, found in Lactobacillus gasseri (strain ATCC 33323 / DSM 20243 / BCRC 14619 / CIP 102991 / JCM 1131 / KCTC 3163 / NCIMB 11718 / NCTC 13722 / AM63).